Reading from the N-terminus, the 389-residue chain is MTNFPKTVMLLGSGELGKEVAIAAQRLGCHVIACDRYADAPAMQVADQAEVLTMTDPNALKTVVNKHQPDVLIPEIEALAVDALQALEDTGICVIPTARATAVTMNRDRIRNLAAGELGLRTARFAYASDAQELQRAAAPLGWPVVVKPVMSSSGKGQSVVHSAAELDKAWEIAMAGARGSSAQVIVEEFLDFDLEITLLTIRQHDGTTLFCPPIGHQQANGDYQCSWQPASISPSQLQQAQTMARTVTDNLGGAGLFGVEFFLCGDEVVFSELSPRPHDTGLVTLISQNLSEFDLHLRAVLGLPIPSITAADAAASRVILAESQGHHVQFSGVEQALTEPDTNLLLFGKREARPGRRMGVALARGTQINEALAKADRCAAAVKVQVMD.

N(1)-(5-phospho-beta-D-ribosyl)glycinamide-binding positions include 15–16 (EL) and E75. ATP-binding positions include R107, K148, 153-158 (SSGKGQ), 188-191 (EEFL), and E196. An ATP-grasp domain is found at 112-302 (NLAAGELGLR…EFDLHLRAVL (191 aa)). Residues E261 and E273 each contribute to the Mg(2+) site. Residues D280, K350, and 357-358 (RR) contribute to the N(1)-(5-phospho-beta-D-ribosyl)glycinamide site.

Belongs to the PurK/PurT family. As to quaternary structure, homodimer.

It carries out the reaction N(1)-(5-phospho-beta-D-ribosyl)glycinamide + formate + ATP = N(2)-formyl-N(1)-(5-phospho-beta-D-ribosyl)glycinamide + ADP + phosphate + H(+). It participates in purine metabolism; IMP biosynthesis via de novo pathway; N(2)-formyl-N(1)-(5-phospho-D-ribosyl)glycinamide from N(1)-(5-phospho-D-ribosyl)glycinamide (formate route): step 1/1. Its function is as follows. Involved in the de novo purine biosynthesis. Catalyzes the transfer of formate to 5-phospho-ribosyl-glycinamide (GAR), producing 5-phospho-ribosyl-N-formylglycinamide (FGAR). Formate is provided by PurU via hydrolysis of 10-formyl-tetrahydrofolate. The chain is Formate-dependent phosphoribosylglycinamide formyltransferase from Synechococcus sp. (strain CC9311).